Consider the following 395-residue polypeptide: Cystathionine beta-lyase (395 aa).

An N6-(pyridoxal phosphate)lysine modification is found at Lys210.

The protein belongs to the trans-sulfuration enzymes family. Homotetramer. Pyridoxal 5'-phosphate serves as cofactor.

The protein localises to the cytoplasm. The catalysed reaction is L,L-cystathionine + H2O = L-homocysteine + pyruvate + NH4(+). It catalyses the reaction an S-substituted L-cysteine + H2O = a thiol + pyruvate + NH4(+). Its pathway is amino-acid biosynthesis; L-methionine biosynthesis via de novo pathway; L-homocysteine from L-cystathionine: step 1/1. In terms of biological role, catalyzes the cleavage of cystathionine to homocysteine, pyruvate and ammonia during methionine biosynthesis. In Salmonella typhimurium (strain LT2 / SGSC1412 / ATCC 700720), this protein is Cystathionine beta-lyase (metC).